We begin with the raw amino-acid sequence, 842 residues long: Translation initiation factor IF-2 (842 aa).

Disordered regions lie at residues 1–41 (MVAK…GFPD) and 112–219 (RPNR…QTYQ). 2 stretches are compositionally biased toward basic and acidic residues: residues 32-41 (PEDKKQGFPD) and 153-165 (RRGEGRPFARDFS). A tr-type G domain is found at 328–497 (ARPPVVTVMG…MLQAEVMELR (170 aa)). Positions 337-344 (GHVDHGKT) are G1. 337 to 344 (GHVDHGKT) serves as a coordination point for GTP. The interval 362–366 (GITQH) is G2. The interval 383–386 (DTPG) is G3. GTP-binding positions include 383–387 (DTPGH) and 437–440 (NKID). A G4 region spans residues 437-440 (NKID). The interval 473–475 (SAL) is G5.

Belongs to the TRAFAC class translation factor GTPase superfamily. Classic translation factor GTPase family. IF-2 subfamily.

It is found in the cytoplasm. Functionally, one of the essential components for the initiation of protein synthesis. Protects formylmethionyl-tRNA from spontaneous hydrolysis and promotes its binding to the 30S ribosomal subunits. Also involved in the hydrolysis of GTP during the formation of the 70S ribosomal complex. This chain is Translation initiation factor IF-2 (infB), found in Treponema pallidum (strain Nichols).